The primary structure comprises 332 residues: MTVSNNKELLLEVNHLGVSFKIKNDKSLFFAKPQTLKAVKDVSFKLYAGETLGVVGESGCGKSTLARAIIGLVEASEGEILWLGKHLRKQSAKQWKETRKDIQMIFQDPLASLNPRMNIGEIIAEPLKIYQPHLSAAEVKEKVQAMMLKVGLLPNLINRYPHEFSGGQCQRIGIARALIIEPKMIICDEPVSALDVSIQAQVVNLLKSLQKEMGLSLIFIAHDLAVVKHISDRVLVMYLGNAMELGSDVEVYNDTKHPYTKALMSAVPIPDPKLERNKSIELLEGDLPSPINPPSGCVFRTRCLKADENCAKQKPPFTSQNNSHFVACLKVL.

One can recognise an ABC transporter domain in the interval Lys-23–Met-264. Gly-56–Ser-63 serves as a coordination point for ATP.

The protein belongs to the ABC transporter superfamily. In terms of assembly, the complex is composed of two ATP-binding proteins (OppD and OppF), two transmembrane proteins (OppB and OppC) and a solute-binding protein (OppA).

It is found in the cell inner membrane. The enzyme catalyses a [peptide](out) + ATP + H2O = a [peptide](in) + ADP + phosphate + H(+). Functionally, part of the ABC transporter complex OppABCDF involved in the uptake of oligopeptides. Probably responsible for energy coupling to the transport system. This chain is Oligopeptide transport ATP-binding protein OppF (oppF), found in Haemophilus influenzae (strain ATCC 51907 / DSM 11121 / KW20 / Rd).